Here is a 751-residue protein sequence, read N- to C-terminus: Photosystem I P700 chlorophyll a apoprotein A1 (751 aa).

A run of 8 helical transmembrane segments spans residues 73 to 96, 159 to 182, 198 to 222, 294 to 312, 349 to 372, 388 to 414, 436 to 458, and 533 to 551; these read VFSA…FHGA, LYST…WHYH, MNHH…HIAL, MAHH…GHQY, WHAQ…HHMY, LSLF…IFMV, AIIS…LYIH, and FMVH…LILL. Positions 575 and 584 each coordinate [4Fe-4S] cluster. Transmembrane regions (helical) follow at residues 591 to 612 and 665 to 687; these read HVFL…HFSW and LSAY…MFLF. A chlorophyll a'-binding site is contributed by His-676. 2 residues coordinate chlorophyll a: Met-684 and Tyr-692. Residue Trp-693 coordinates phylloquinone. The helical transmembrane segment at 725–745 threads the bilayer; that stretch reads AVGVAHYLLGGIATTWSFFLA.

It belongs to the PsaA/PsaB family. In terms of assembly, the PsaA/B heterodimer binds the P700 chlorophyll special pair and subsequent electron acceptors. PSI consists of a core antenna complex that captures photons, and an electron transfer chain that converts photonic excitation into a charge separation. The eukaryotic PSI reaction center is composed of at least 11 subunits. The cofactor is P700 is a chlorophyll a/chlorophyll a' dimer, A0 is one or more chlorophyll a, A1 is one or both phylloquinones and FX is a shared 4Fe-4S iron-sulfur center..

It is found in the plastid. It localises to the chloroplast thylakoid membrane. It carries out the reaction reduced [plastocyanin] + hnu + oxidized [2Fe-2S]-[ferredoxin] = oxidized [plastocyanin] + reduced [2Fe-2S]-[ferredoxin]. Its function is as follows. PsaA and PsaB bind P700, the primary electron donor of photosystem I (PSI), as well as the electron acceptors A0, A1 and FX. PSI is a plastocyanin/cytochrome c6-ferredoxin oxidoreductase, converting photonic excitation into a charge separation, which transfers an electron from the donor P700 chlorophyll pair to the spectroscopically characterized acceptors A0, A1, FX, FA and FB in turn. Oxidized P700 is reduced on the lumenal side of the thylakoid membrane by plastocyanin or cytochrome c6. This chain is Photosystem I P700 chlorophyll a apoprotein A1, found in Ostreococcus tauri.